A 318-amino-acid chain; its full sequence is Ferrochelatase (318 aa).

Fe cation is bound by residues H186 and E264.

Belongs to the ferrochelatase family.

It is found in the cytoplasm. It carries out the reaction heme b + 2 H(+) = protoporphyrin IX + Fe(2+). It participates in porphyrin-containing compound metabolism; protoheme biosynthesis; protoheme from protoporphyrin-IX: step 1/1. Its function is as follows. Catalyzes the ferrous insertion into protoporphyrin IX. This is Ferrochelatase from Chlamydia abortus (strain DSM 27085 / S26/3) (Chlamydophila abortus).